A 43-amino-acid chain; its full sequence is METATLVAISISCLLVSFTGYALYTAFGQPSEQLRDPFEDHED.

A helical membrane pass occupies residues 5–27 (TLVAISISCLLVSFTGYALYTAF).

Belongs to the PsbN family.

It is found in the plastid. The protein resides in the chloroplast thylakoid membrane. Its function is as follows. May play a role in photosystem I and II biogenesis. The protein is Protein PsbN of Cedrus deodara (Deodar cedar).